A 513-amino-acid polypeptide reads, in one-letter code: Activin receptor type-2B (513 aa).

An N-terminal signal peptide occupies residues Met-1–Gly-18. Over Ser-19 to Thr-137 the chain is Extracellular. Intrachain disulfides connect Cys-29/Cys-59, Cys-49/Cys-77, Cys-84/Cys-103, Cys-90/Cys-102, and Cys-104/Cys-109. 2 N-linked (GlcNAc...) asparagine glycosylation sites follow: Asn-42 and Asn-65. Residues Val-138 to Trp-158 traverse the membrane as a helical segment. The Cytoplasmic portion of the chain corresponds to Met-159–Ile-513. One can recognise a Protein kinase domain in the interval Leu-190–Leu-481. ATP is bound by residues Lys-196–Val-204 and Lys-217. Asp-322 functions as the Proton acceptor in the catalytic mechanism. Residues Asp-492–Ile-513 form an interaction with DYNLT1 region.

Belongs to the protein kinase superfamily. TKL Ser/Thr protein kinase family. TGFB receptor subfamily. Forms an activin receptor complex with activin type II receptors such as ACVR1B. Interacts with VPS39. Interacts with DYNLT1. Interacts with BMP3. Interacts with BMP2. It depends on Mg(2+) as a cofactor. Mn(2+) serves as cofactor. Post-translationally, phosphorylated. Constitutive phosphorylation is in part catalyzed by its own kinase activity.

The protein localises to the cell membrane. It carries out the reaction L-threonyl-[receptor-protein] + ATP = O-phospho-L-threonyl-[receptor-protein] + ADP + H(+). The enzyme catalyses L-seryl-[receptor-protein] + ATP = O-phospho-L-seryl-[receptor-protein] + ADP + H(+). In terms of biological role, transmembrane serine/threonine kinase activin type-2 receptor forming an activin receptor complex with activin type-1 serine/threonine kinase receptors (ACVR1, ACVR1B or ACVR1c). Transduces the activin signal from the cell surface to the cytoplasm and is thus regulating many physiological and pathological processes including neuronal differentiation and neuronal survival, hair follicle development and cycling, FSH production by the pituitary gland, wound healing, extracellular matrix production, immunosuppression and carcinogenesis. Activin is also thought to have a paracrine or autocrine role in follicular development in the ovary. Within the receptor complex, the type-2 receptors act as a primary activin receptors (binds activin-A/INHBA, activin-B/INHBB as well as inhibin-A/INHA-INHBA). The type-1 receptors like ACVR1B act as downstream transducers of activin signals. Activin binds to type-2 receptor at the plasma membrane and activates its serine-threonine kinase. The activated receptor type-2 then phosphorylates and activates the type-1 receptor. Once activated, the type-1 receptor binds and phosphorylates the SMAD proteins SMAD2 and SMAD3, on serine residues of the C-terminal tail. Soon after their association with the activin receptor and subsequent phosphorylation, SMAD2 and SMAD3 are released into the cytoplasm where they interact with the common partner SMAD4. This SMAD complex translocates into the nucleus where it mediates activin-induced transcription. Inhibitory SMAD7, which is recruited to ACVR1B through FKBP1A, can prevent the association of SMAD2 and SMAD3 with the activin receptor complex, thereby blocking the activin signal. Activin signal transduction is also antagonized by the binding to the receptor of inhibin-B via the IGSF1 inhibin coreceptor. The protein is Activin receptor type-2B (Acvr2b) of Rattus norvegicus (Rat).